The sequence spans 359 residues: Replication-associated protein (359 aa).

A CRESS-DNA virus Rep endonuclease domain is found at 8 to 116 (QINAKHYFLT…DGDVLEWGTF (109 aa)). The short motif at 15 to 18 (FLTF) is the RCR-1 element. Glu-49, His-57, and His-59 together coordinate a divalent metal cation. The short motif at 57 to 59 (HLH) is the RCR-2 element. Residue Tyr-103 is the For DNA cleavage activity of the active site. An RCR-3 motif is present at residues 103 to 106 (YIDK). Asp-107 contacts a divalent metal cation. The binding to RBR1 stretch occupies residues 143–153 (KSEALDVIKEL). Residues 156–176 (RDYILHFHNINSNLNMVFQVP) are oligomerization. 221-228 (GDSRTGKT) provides a ligand contact to ATP.

The protein belongs to the geminiviridae Rep protein family. In terms of assembly, homooligomer. Interacts with the replication enhancer protein (REn). Interacts with host retinoblastoma-related protein 1 (RBR1), and may thereby induce the transcription of host replicative enzymes even if the cell is not dividing anymore. Interacts with host PCNA. Interacts with host SCE1 protein. The cofactor is Mg(2+). Requires Mn(2+) as cofactor.

The protein localises to the host nucleus. Its function is as follows. Essential for the replication of viral ssDNA. The closed circular ssDNA genome is first converted to a superhelical dsDNA. Rep binds a specific region at the genome origin of replication. It introduces an endonucleolytic nick within the conserved sequence 5'-TAATATTAC-3' in the intergenic region of the genome present in all geminiviruses, thereby initiating the rolling circle replication (RCR). Following cleavage, binds covalently to the 5'-phosphate of DNA as a tyrosyl ester. The cleavage gives rise to a free 3'-OH that serves as a primer for the cellular DNA polymerase. The polymerase synthesizes the (+) strand DNA by rolling circle mechanism. After one round of replication, a Rep-catalyzed nucleotidyl transfer reaction releases a circular single-stranded virus genome, thereby terminating the replication. Displays origin-specific DNA cleavage, nucleotidyl transferase, ATPase and helicase activities. The polypeptide is Replication-associated protein (Solanum lycopersicum (Tomato)).